A 292-amino-acid chain; its full sequence is MSVLYPSLEDLKVGQVIQAQGRASPTMPTLPAPMASAPPLSELYPNLAELESYMGLSLSSQEVQKNLTQIPDSDNMVVTSPGPGQVVAPVSGNNLGILRAEIKPGVREIHLCKDERGKTGLRLQAVDKGLFVQLVQANTPASLVGLRFGDQILQIDGCDCAGWNTHKAHKVLKKASAEKIVMVIRDRPFQRTVTMHKDSSGQVGFSIKKGKIVSVVKGSSAARNGLLTNHYVCEVNGQNVIGLKDKKVTEILTTAGDVITLTIIPTVIYEHMIKRLSPLLLHHTMDHSIPDT.

2 PDZ domains span residues 108 to 187 and 192 to 267; these read EIHL…IRDR and TVTM…IPTV.

As to quaternary structure, monomer and homodimer. Interacts with SDCBP. Interacts with TM4SF1.

Its subcellular location is the cytoplasm. It localises to the nucleus. The protein localises to the nucleolus. The protein resides in the nucleoplasm. It is found in the cell membrane. Its subcellular location is the nucleus speckle. Binds phosphatidylinositol 4,5-bisphosphate (PIP2). May play a role in the organization of nuclear PIP2, cell division and cell survival. The sequence is that of Syntenin-2 (Sdcbp2) from Mus musculus (Mouse).